The sequence spans 769 residues: MLSNRAFGETIEDYEVQHLLGKGGFATVYKARCLHTHQDVAIKMIDKKLIQGTGLTSRVRQEVEIHSRLKHPSVLQLYTFFQDANYVYLVLELAHNGELHRYMNHIARHFTETEAASILKQVVAGLLYLHSHNIMHRDISLSNLLLSREMHVKIADFGLATQLKRPDERHMTMCGTPNYISPEVVSRSSHGLPADVWSVGCMLYTLLVGRPPFETDAVQSTLNKVVMSEYIMPAHLSYEAQDLINKLLKKLPHERITLEAVLCHPFMLKCSNGGHSAPGALNMFSQSMESGDSGIITFASSDSRNSQQIRSVENSGPQQVLPQIREEFKQVHHKLPYEQPGLFGQASTGLAEPNWTGAAKTSAFRMETGMVPNSKPASLKEDRISVPPLNTKRLLPTRYKTKNAIMSILRNGEVVLEFLKFRPTYNEDRINDICRISDDGQRIIIYQPDPGRGLPVREQPPDLQIPSGDCVYNYDNLPNKHWKKYIYGARFVGLVKSKTPKVTYFSTLGKCQLMETMTDSEIRFYSGAKLLKAPTEGLKVYDRNGMLLSDHSCSESRSLIEHGNECFTHCVNISNALEVAQTKDNSCFPVTIGRRPITDVQPAQRLDGLRDTTNITFSTPKSNQGSINFSLSTISSTRNTSDFGTNCSRSNMLAAHQNIPIKRINVPDIGIATELSHGVVQVQFYDGSVVSVIPSMQGGGITYTQPNGTSTHFGKDDDLPFPVRDRVGQIPNIQLKLKTAPLLGSGRKTDYNNAMTPKTTTPYYNRMLL.

The region spanning 14-267 is the Protein kinase domain; it reads YEVQHLLGKG…LEAVLCHPFM (254 aa). Residues 20–28 and K43 each bind ATP; that span reads LGKGGFATV. The Proton acceptor role is filled by D138. Positions 381–498 constitute a Cryptic POLO box 1 (CPB1) domain; that stretch reads EDRISVPPLN…ARFVGLVKSK (118 aa). Residues 499–602 form the Cryptic POLO box 2 (CPB2) domain; it reads TPKVTYFSTL…GRRPITDVQP (104 aa). The 80-residue stretch at 660-739 folds into the POLO box domain; that stretch reads PIKRINVPDI…IPNIQLKLKT (80 aa).

It belongs to the protein kinase superfamily. Ser/Thr protein kinase family. CDC5/Polo subfamily. As to quaternary structure, homodimer. Ubiquitinated by the SCF(Slimb) ubiquitin ligase complex; leading to its degradation by the proteasome during interphase and regulating centriole number and ensuring the block to centriole reduplication.

It is found in the cytoplasm. The protein localises to the cytoskeleton. Its subcellular location is the microtubule organizing center. It localises to the centrosome. The protein resides in the centriole. It catalyses the reaction L-seryl-[protein] + ATP = O-phospho-L-seryl-[protein] + ADP + H(+). The catalysed reaction is L-threonyl-[protein] + ATP = O-phospho-L-threonyl-[protein] + ADP + H(+). Serine/threonine-protein kinase that plays a central role in centriole duplication. Able to trigger procentriole formation on the surface of the mother centriole cylinder, using mother centriole as a platform, leading to the recruitment of centriole biogenesis proteins such as sas-6. When overexpressed, it is able to induce centrosome amplification through the simultaneous generation of multiple procentrioles adjoining each parental centriole during S phase. Centrosome amplification following overexpression can initiate tumorigenesis, highlighting the importance of centrosome regulation in cancers. The protein is Serine/threonine-protein kinase PLK4 (SAK) of Drosophila sechellia (Fruit fly).